The following is a 253-amino-acid chain: tRNA pseudouridine synthase A (253 aa).

The active-site Nucleophile is D53. Y111 is a substrate binding site.

This sequence belongs to the tRNA pseudouridine synthase TruA family. As to quaternary structure, homodimer.

It carries out the reaction uridine(38/39/40) in tRNA = pseudouridine(38/39/40) in tRNA. Its function is as follows. Formation of pseudouridine at positions 38, 39 and 40 in the anticodon stem and loop of transfer RNAs. The sequence is that of tRNA pseudouridine synthase A from Chlorobium luteolum (strain DSM 273 / BCRC 81028 / 2530) (Pelodictyon luteolum).